Here is a 410-residue protein sequence, read N- to C-terminus: LanC-like protein GCR2 (410 aa).

Residues cysteine 283, cysteine 328, and histidine 329 each contribute to the Zn(2+) site.

It belongs to the LanC-like protein family. As to quaternary structure, may interact (via C-terminus) with GPA1.

May play a role in abscisic acid (ABA) signaling. The polypeptide is LanC-like protein GCR2 (GCR2) (Arabidopsis thaliana (Mouse-ear cress)).